A 637-amino-acid polypeptide reads, in one-letter code: 1-deoxy-D-xylulose-5-phosphate synthase (637 aa).

Thiamine diphosphate contacts are provided by residues H76 and 117–119; that span reads GHS. D148 contributes to the Mg(2+) binding site. Thiamine diphosphate is bound by residues 149–150, N177, Y294, and E381; that span reads GA. N177 lines the Mg(2+) pocket.

This sequence belongs to the transketolase family. DXPS subfamily. Homodimer. Requires Mg(2+) as cofactor. Thiamine diphosphate serves as cofactor.

The enzyme catalyses D-glyceraldehyde 3-phosphate + pyruvate + H(+) = 1-deoxy-D-xylulose 5-phosphate + CO2. It functions in the pathway metabolic intermediate biosynthesis; 1-deoxy-D-xylulose 5-phosphate biosynthesis; 1-deoxy-D-xylulose 5-phosphate from D-glyceraldehyde 3-phosphate and pyruvate: step 1/1. Its function is as follows. Catalyzes the acyloin condensation reaction between C atoms 2 and 3 of pyruvate and glyceraldehyde 3-phosphate to yield 1-deoxy-D-xylulose-5-phosphate (DXP). The chain is 1-deoxy-D-xylulose-5-phosphate synthase from Neisseria meningitidis serogroup C / serotype 2a (strain ATCC 700532 / DSM 15464 / FAM18).